Consider the following 95-residue polypeptide: Co-chaperonin GroES (95 aa).

This sequence belongs to the GroES chaperonin family. Heptamer of 7 subunits arranged in a ring. Interacts with the chaperonin GroEL.

The protein resides in the cytoplasm. Functionally, together with the chaperonin GroEL, plays an essential role in assisting protein folding. The GroEL-GroES system forms a nano-cage that allows encapsulation of the non-native substrate proteins and provides a physical environment optimized to promote and accelerate protein folding. GroES binds to the apical surface of the GroEL ring, thereby capping the opening of the GroEL channel. This Lachnoclostridium phytofermentans (strain ATCC 700394 / DSM 18823 / ISDg) (Clostridium phytofermentans) protein is Co-chaperonin GroES.